The primary structure comprises 260 residues: Cytochrome c oxidase subunit 3 (260 aa).

Transmembrane regions (helical) follow at residues 14-34 (PWPLTGAISALMMTSGLILWF), 41-61 (LLLAGTILLLLTVINWWRDVI), 81-101 (GMILFITSEVCFFFAFFWAFF), 126-146 (FLVPLLNTAVLLSSGVTVTWA), 158-178 (AIQGLFLTVILGIYFTGLQAW), 196-216 (FFVATGFHGLHVLIGTTFLFI), and 238-258 (AWYWHFVDVVWLFLYICICWW).

Belongs to the cytochrome c oxidase subunit 3 family. Component of the cytochrome c oxidase (complex IV, CIV), a multisubunit enzyme composed of a catalytic core of 3 subunits and several supernumerary subunits. The complex exists as a monomer or a dimer and forms supercomplexes (SCs) in the inner mitochondrial membrane with ubiquinol-cytochrome c oxidoreductase (cytochrome b-c1 complex, complex III, CIII).

The protein resides in the mitochondrion inner membrane. The catalysed reaction is 4 Fe(II)-[cytochrome c] + O2 + 8 H(+)(in) = 4 Fe(III)-[cytochrome c] + 2 H2O + 4 H(+)(out). Its function is as follows. Component of the cytochrome c oxidase, the last enzyme in the mitochondrial electron transport chain which drives oxidative phosphorylation. The respiratory chain contains 3 multisubunit complexes succinate dehydrogenase (complex II, CII), ubiquinol-cytochrome c oxidoreductase (cytochrome b-c1 complex, complex III, CIII) and cytochrome c oxidase (complex IV, CIV), that cooperate to transfer electrons derived from NADH and succinate to molecular oxygen, creating an electrochemical gradient over the inner membrane that drives transmembrane transport and the ATP synthase. Cytochrome c oxidase is the component of the respiratory chain that catalyzes the reduction of oxygen to water. Electrons originating from reduced cytochrome c in the intermembrane space (IMS) are transferred via the dinuclear copper A center (CU(A)) of subunit 2 and heme A of subunit 1 to the active site in subunit 1, a binuclear center (BNC) formed by heme A3 and copper B (CU(B)). The BNC reduces molecular oxygen to 2 water molecules using 4 electrons from cytochrome c in the IMS and 4 protons from the mitochondrial matrix. The chain is Cytochrome c oxidase subunit 3 (COIII) from Patiria pectinifera (Starfish).